Consider the following 301-residue polypeptide: Lufaxin (301 aa).

The first 23 residues, 1–23 (MNSINFLSIVGLISFGFIVAVKC), serve as a signal peptide directing secretion. 4 cysteine pairs are disulfide-bonded: cysteine 52/cysteine 60, cysteine 78/cysteine 137, cysteine 102/cysteine 112, and cysteine 258/cysteine 265. An N-linked (GlcNAc...) asparagine glycan is attached at asparagine 262.

As to quaternary structure, interacts with factor Xa. Associates with complement proconvertase C3b-B complex. In terms of tissue distribution, expressed in salivary glands.

The protein resides in the secreted. Its function is as follows. Sand fly salivary protein with antithrombotic, and anti-complement (alternative pathway) activities. Is a slow, tight, non-competitive, and reversible inhibitor of factor Xa (FXa, F10). Is specific for FXa (Kd=3.86 nM) and does not interact with non-activated FX, or all other enzymes tested. In addition, it blocks prothrombinase and increases both prothrombin time and activated partial thromboplastin time. It also prevents protease-activated receptor 2 (F2RL1, PAR2) activation by FXa. In vivo, it abrogates edema formation triggered by injection of FXa in the paw of mice. Moreover, it prevents FeCl(3)-induced carotid artery thrombus formation and prolongs activated partial thromboplastin time ex vivo, implying that it works as an anticoagulant in vivo. It also inhibits the early steps of the alternative pathway of complement by direct binding to the proconvertase C3b-B complex, by inhibiting activation of factor B and consequently the formation of the C3 convertase. This Lutzomyia longipalpis (Sand fly) protein is Lufaxin.